Here is a 212-residue protein sequence, read N- to C-terminus: Proheparin-binding EGF-like growth factor (212 aa).

An N-terminal signal peptide occupies residues 1-18 (MDGRVVLIHALLTAVCSA). At 19–167 (AVGKFGRDGP…PSTYDHTTAL (149 aa)) the chain is on the extracellular side. A disordered region spans residues 82-108 (SKPQGPVTPKKKGNGNKRRKGKGLGKK). Over residues 90–106 (PKKKGNGNKRRKGKGLG) the composition is skewed to basic residues. Residues 108-148 (KRDPCLRKYKDFCIHGECKYIRELGAPSCICQPGYHGERCH) form the EGF-like domain. Intrachain disulfides connect C112-C125, C120-C136, and C138-C147. The propeptide at 153 to 212 (PVEHPPSTYDHTTALAVVAVVLSSLCLVIITALLMFRCHKRGVYDVENEEKIKLGITVNH) is C-terminal. Residues 168-188 (AVVAVVLSSLCLVIITALLMF) traverse the membrane as a helical segment. Topologically, residues 189 to 212 (RCHKRGVYDVENEEKIKLGITVNH) are cytoplasmic.

In terms of assembly, interacts with CNIH2.

The protein localises to the secreted. Its subcellular location is the extracellular space. The protein resides in the cell membrane. Functionally, may be involved in macrophage-mediated cellular proliferation. It is mitogenic for fibroblasts and smooth muscle but not endothelial cells. It is able to bind EGF receptor/EGFR with higher affinity than EGF itself and is a far more potent mitogen for smooth muscle cells than EGF. Plays an important role in the proper development of cranial nerves by inhibiting the migration of the cranial neural crest cells (NCCs) into the odd-numbered neuromeres (r3 and r5) of the hindbrain Plays a role in mediating v-Jun-induced oncogenic transformation. The protein is Proheparin-binding EGF-like growth factor (HBEGF) of Gallus gallus (Chicken).